The following is a 547-amino-acid chain: Threonylcarbamoyladenosine tRNA methylthiotransferase (547 aa).

Positions 30 to 51 (ARKSVVPRARKHKQETGEQMQT) are disordered. Positions 59–167 (QKVWLKTWGC…VVEVVDEAIK (109 aa)) constitute an MTTase N-terminal domain. Positions 68, 104, 133, 209, 213, and 216 each coordinate [4Fe-4S] cluster. One can recognise a Radical SAM core domain in the interval 195–426 (RKNPLIEIIS…ALFHSYRPYD (232 aa)). A TRAM domain is found at 426-488 (DHKMGEQQQV…KHYMKGRPLE (63 aa)). Residues 527 to 547 (ILAVVLLLSAVLLALLMEKLL) form a helical membrane-spanning segment.

It belongs to the methylthiotransferase family. CDKAL1 subfamily. [4Fe-4S] cluster is required as a cofactor.

It localises to the endoplasmic reticulum membrane. It catalyses the reaction N(6)-L-threonylcarbamoyladenosine(37) in tRNA + (sulfur carrier)-SH + AH2 + 2 S-adenosyl-L-methionine = 2-methylsulfanyl-N(6)-L-threonylcarbamoyladenosine(37) in tRNA + (sulfur carrier)-H + 5'-deoxyadenosine + L-methionine + A + S-adenosyl-L-homocysteine + 2 H(+). Functionally, catalyzes the methylthiolation of N6-threonylcarbamoyladenosine (t(6)A), leading to the formation of 2-methylthio-N6-threonylcarbamoyladenosine (ms(2)t(6)A) at position 37 in tRNAs that read codons beginning with adenine. The sequence is that of Threonylcarbamoyladenosine tRNA methylthiotransferase (cdkal1) from Danio rerio (Zebrafish).